The primary structure comprises 310 residues: Ribose-phosphate pyrophosphokinase (310 aa).

Residues 34–36 and 93–94 contribute to the ATP site; these read DGE and RQ. His127 and Asp167 together coordinate Mg(2+). The active site involves Lys190. Residues Arg192, Asp216, and 220-224 each bind D-ribose 5-phosphate; that span reads DSGGT.

Belongs to the ribose-phosphate pyrophosphokinase family. Class I subfamily. As to quaternary structure, homohexamer. Requires Mg(2+) as cofactor.

It is found in the cytoplasm. It catalyses the reaction D-ribose 5-phosphate + ATP = 5-phospho-alpha-D-ribose 1-diphosphate + AMP + H(+). The protein operates within metabolic intermediate biosynthesis; 5-phospho-alpha-D-ribose 1-diphosphate biosynthesis; 5-phospho-alpha-D-ribose 1-diphosphate from D-ribose 5-phosphate (route I): step 1/1. Its function is as follows. Involved in the biosynthesis of the central metabolite phospho-alpha-D-ribosyl-1-pyrophosphate (PRPP) via the transfer of pyrophosphoryl group from ATP to 1-hydroxyl of ribose-5-phosphate (Rib-5-P). This chain is Ribose-phosphate pyrophosphokinase, found in Maricaulis maris (strain MCS10) (Caulobacter maris).